Reading from the N-terminus, the 316-residue chain is NAC domain-containing protein 22 (316 aa).

In terms of domain architecture, NAC spans 17–170; that stretch reads DLPGFRFHPT…DMVLCKIYRK (154 aa). A DNA-binding region spans residues 117 to 176; sequence IGLKKTLVFYQGRAPRGTKTDWVMNEYRLPDYGAARAAAPPPKEDMVLCKIYRKATPLKE. Residues 229–260 form a disordered region; sequence QSSSSSAAPSGSSSKNGGAGAPREAKKEEADV. The segment covering 230–244 has biased composition (low complexity); that stretch reads SSSSSAAPSGSSSKN.

The protein resides in the nucleus. In terms of biological role, transcription activator that binds sequence-specific DNA motifs. Involved in stress response. Plays a positive role in drought and salt stress tolerance through the modulation of abscisic acid-mediated signaling. The chain is NAC domain-containing protein 22 from Oryza sativa subsp. japonica (Rice).